The chain runs to 395 residues: MDNHSSVPWASAASVTCLSLDAKCHSSSSSCSSKSTASSISASPETQTMRHIAHTQRCLSRLTSLVALLLIVLPMMFSPAHSCGPGRGLGRHRARNLYPLVLKQTIPNLSEYTNSASGPLEGVIRRDSPKFKDLVPNYNRDILFRDEEGTGADRLMSKRCKEKLNVLAYSVMNEWPGIRLLVTESWDEDYHHGQESLHYEGRAVTIATSDRDQSKYGMLARLAVEAGFDWVSYVSRRHIYCSVKSDSSISSHVHGCFTPESTALLESGVRKPLGELSIGDRVLSMTANGQGVYSEVILFMDRNLEQMQNFVQLHTDGGAVLTVTPAHLVSVWQPESQKLTFVFADRIEESTFFLLRDGQSGGGGEKQVQQNGIHWYANALYKVKDYVLPQSWRHD.

The signal sequence occupies residues 1–26 (MDNHSSVPWASAASVTCLSLDAKCHS). Residues 26 to 43 (SSSSSCSSKSTASSISAS) are compositionally biased toward low complexity. The interval 26 to 46 (SSSSSCSSKSTASSISASPET) is disordered. Positions 27–82 (SSSSCSSKSTASSISASPETQTMRHIAHTQRCLSRLTSLVALLLIVLPMMFSPAHS) are excised as a propeptide. Residue Cys-83 is the site of N-palmitoyl cysteine attachment. Glu-147, Glu-148, Asp-153, Thr-183, Glu-184, Asp-187, and Asp-189 together coordinate Ca(2+). A lipid anchor (Cholesterol glycine ester) is attached at Gly-255.

It belongs to the hedgehog family. As to quaternary structure, interacts with shf. Post-translationally, the C-terminal part of the hedgehog protein precursor displays an autoproteolysis activity that results in the cleavage of the full-length protein into two parts (N-product and C-product). In addition, the C-terminal part displays a cholesterol transferase activity that results by the covalent attachment of a cholesterol moiety to the C-terminal of the newly generated N-product. The N-product is the active species in both local and long-range signaling, whereas the C-product has no signaling activity. Cholesterylation is required for N-product targeting to lipid rafts and multimerization. In terms of processing, N-palmitoylation by Rasp of the hedgehog N-product, within the secretory pathway, is required for the embryonic and larval patterning activities of the hedgehog signal.

Its subcellular location is the nucleus. The protein resides in the cytoplasm. It localises to the cell membrane. The catalysed reaction is glycyl-L-cysteinyl-[protein] + cholesterol + H(+) = [protein]-C-terminal glycyl cholesterol ester + N-terminal L-cysteinyl-[protein]. Its function is as follows. The C-terminal part of the hedgehog protein precursor displays an autoproteolysis activity that results in the cleavage of the full-length protein into two parts (N-product and C-product). In addition, the C-terminal part displays a cholesterol transferase activity that results by the covalent attachment of a cholesterol moiety to the C-terminal of the newly generated N-product. Once cleaved, the C-product has no signaling activity and diffuses from the cell. Functionally, the dually lipidated hedgehog protein N-product is a morphogen which is essential for a variety of patterning events during development. Establishes the anterior-posterior axis of the embryonic segments and patterns the larval imaginal disks. Binds to the patched (ptc) receptor, which functions in association with smoothened (smo), to activate the transcription of target genes wingless (wg), decapentaplegic (dpp) and ptc. In the absence of hh, ptc represses the constitutive signaling activity of smo through fused (fu). Essential component of a signaling pathway which regulates the Duox-dependent gut immune response to bacterial uracil; required to activate Cad99C-dependent endosome formation, norpA-dependent Ca2+ mobilization and p38 MAPK, which are essential steps in the Duox-dependent production of reactive oxygen species (ROS) in response to intestinal bacterial infection. During photoreceptor differentiation, it up-regulates transcription of Ubr3, which in turn promotes the hh-signaling pathway by mediating the ubiquitination and degradation of cos. The sequence is that of Protein hedgehog from Drosophila simulans (Fruit fly).